Here is a 157-residue protein sequence, read N- to C-terminus: Transcriptional repressor NrdR (157 aa).

The disordered stretch occupies residues 1–21; it reads MKCPHCGNNGSRVVDSRPTDE. Residues 3 to 34 fold into a zinc finger; that stretch reads CPHCGNNGSRVVDSRPTDEGRVIRRRRECEKC. Residues 49 to 139 enclose the ATP-cone domain; the sequence is LLVIKKNGSR…VYRQFKDMHV (91 aa).

The protein belongs to the NrdR family. The cofactor is Zn(2+).

In terms of biological role, negatively regulates transcription of bacterial ribonucleotide reductase nrd genes and operons by binding to NrdR-boxes. The sequence is that of Transcriptional repressor NrdR from Pediococcus pentosaceus (strain ATCC 25745 / CCUG 21536 / LMG 10740 / 183-1w).